The primary structure comprises 196 residues: GTP cyclohydrolase 1 (196 aa).

3 residues coordinate Zn(2+): Cys86, His89, and Cys158.

It belongs to the GTP cyclohydrolase I family. In terms of assembly, toroid-shaped homodecamer, composed of two pentamers of five dimers.

It catalyses the reaction GTP + H2O = 7,8-dihydroneopterin 3'-triphosphate + formate + H(+). The protein operates within cofactor biosynthesis; 7,8-dihydroneopterin triphosphate biosynthesis; 7,8-dihydroneopterin triphosphate from GTP: step 1/1. The chain is GTP cyclohydrolase 1 from Clostridium botulinum (strain Langeland / NCTC 10281 / Type F).